The primary structure comprises 194 residues: UPF0301 protein BT_0659 (194 aa).

This sequence belongs to the UPF0301 (AlgH) family.

The protein is UPF0301 protein BT_0659 of Bartonella tribocorum (strain CIP 105476 / IBS 506).